Here is a 347-residue protein sequence, read N- to C-terminus: Protein RecA (347 aa).

67–74 (GPESSGKT) contributes to the ATP binding site.

Belongs to the RecA family.

It is found in the cytoplasm. In terms of biological role, can catalyze the hydrolysis of ATP in the presence of single-stranded DNA, the ATP-dependent uptake of single-stranded DNA by duplex DNA, and the ATP-dependent hybridization of homologous single-stranded DNAs. It interacts with LexA causing its activation and leading to its autocatalytic cleavage. This Helicobacter acinonychis (strain Sheeba) protein is Protein RecA.